The sequence spans 423 residues: MAQAVVPAMQCRVGVKAAAGRVWSAGRTRTGRGGASPGFKVMAVSTGSTGVVPRLEQLLNMDTTPYTDKVIAEYIWVGGSGIDIRSKSRTISKPVEDPSELPKWNYDGSSTGQAPGEDSEVILYPQAIFKDPFRGGNNVLVICDTYTPQGEPLPTNKRHRAAQIFSDPKVGEQVPWFGIEQEYTLLQKDVNWPLGWPVGGFPGPQGPYYCAVGADKSFGRDISDAHYKACLYAGINISGTNGEVMPGQWEYQVGPSVGIEAGDHIWISRYILERITEQAGVVLTLDPKPIQGDWNGAGCHTNYSTKTMREDGGFEEIKRAILNLSLRHDLHISAYGEGNERRLTGKHETASIGTFSWGVANRGCSIRVGRDTEAKGKGYLEDRRPASNMDPYIVTGLLAETTILWQPSLEAEALAAKKLALKV.

Residues 1–51 constitute a chloroplast transit peptide; that stretch reads MAQAVVPAMQCRVGVKAAAGRVWSAGRTRTGRGGASPGFKVMAVSTGSTGV. A GS beta-grasp domain is found at 70–150; it reads VIAEYIWVGG…VICDTYTPQG (81 aa). The tract at residues 89 to 115 is disordered; sequence RTISKPVEDPSELPKWNYDGSSTGQAP. In terms of domain architecture, GS catalytic spans 154-423; that stretch reads PTNKRHRAAQ…LAAKKLALKV (270 aa).

This sequence belongs to the glutamine synthetase family. Homooctamer.

Its subcellular location is the plastid. The protein localises to the chloroplast. It carries out the reaction L-glutamate + NH4(+) + ATP = L-glutamine + ADP + phosphate + H(+). The light-modulated chloroplast enzyme, encoded by a nuclear gene and expressed primarily in leaves, is responsible for the reassimilation of the ammonia generated by photorespiration. The chain is Glutamine synthetase, chloroplastic (GLN2) from Zea mays (Maize).